We begin with the raw amino-acid sequence, 174 residues long: Protein TM_1551 (174 aa).

One can recognise an AMMECR1 domain in the interval 2–174 (IGEHPYVKWA…IYRFTVERYK (173 aa)).

The polypeptide is Protein TM_1551 (Thermotoga maritima (strain ATCC 43589 / DSM 3109 / JCM 10099 / NBRC 100826 / MSB8)).